We begin with the raw amino-acid sequence, 290 residues long: Endoplasmic reticulum-Golgi intermediate compartment protein 1 (290 aa).

Topologically, residues 1–26 (MPFDFRRFDIYRKVPKDLTQPTYTGA) are cytoplasmic. The helical transmembrane segment at 27–47 (IISICCCLFITFLFLSELTGF) threads the bilayer. The Lumenal portion of the chain corresponds to 48 to 254 (IANEIVNELY…RRQPMYRFIT (207 aa)). A glycan (N-linked (GlcNAc...) asparagine) is linked at Asn-74. Residues 255 to 275 (TVCAIIGGTFTVAGILDSFIF) form a helical membrane-spanning segment. Over 276 to 290 (TASEAWKKIQLGKMQ) the chain is Cytoplasmic.

The protein belongs to the ERGIC family.

Its subcellular location is the endoplasmic reticulum membrane. The protein localises to the endoplasmic reticulum-Golgi intermediate compartment membrane. It is found in the golgi apparatus membrane. Possible role in transport between endoplasmic reticulum and Golgi. This chain is Endoplasmic reticulum-Golgi intermediate compartment protein 1 (ergic1), found in Xenopus laevis (African clawed frog).